A 233-amino-acid chain; its full sequence is Putative N-acetylmuramoyl-L-alanine amidase (233 aa).

One can recognise a MurNAc-LAA domain in the interval 1 to 219 (MIDPGHGGQD…IANAIYIALK (219 aa)).

This sequence belongs to the N-acetylmuramoyl-L-alanine amidase 3 family.

It localises to the secreted. The catalysed reaction is Hydrolyzes the link between N-acetylmuramoyl residues and L-amino acid residues in certain cell-wall glycopeptides.. Cell-wall hydrolase involved in septum cleavage during cell division. The chain is Putative N-acetylmuramoyl-L-alanine amidase (amiB) from Buchnera aphidicola subsp. Schizaphis graminum (strain Sg).